The following is a 177-amino-acid chain: Calcium-binding protein CML38 (177 aa).

Residues 1 to 11 (MKNNTQPQSSF) show a composition bias toward polar residues. Residues 1-44 (MKNNTQPQSSFKKLCRKLSPKREDSAGEIQQHNSSNGEDKNREL) are disordered. 4 consecutive EF-hand domains span residues 39–74 (DKNRELEAVFSYMDANRDGRISPEELQKSFMTLGEQ), 75–110 (LSDEEAVAAVRLSDTDGDGMLDFEEFSQLIKVDDEE), 111–146 (EKKMELKGAFRLYIAEGEDCITPRSLKMMLKKLGES), and 147–177 (RTTDDCRVMISAFDLNADGVLSFDEFALMMR). Ca(2+)-binding residues include aspartate 52, asparagine 54, aspartate 56, arginine 58, glutamate 63, aspartate 88, aspartate 90, aspartate 92, methionine 94, and glutamate 99. Ca(2+)-binding residues include aspartate 160, asparagine 162, aspartate 164, and glutamate 171.

In terms of assembly, binds to ABCG36. In terms of tissue distribution, expressed in cotyledons and guard cells of young leaves. In mature root, expressed in the epidermis, trichoblasts, young lateral root and root tip. Expressed from stage 9 to 15 of flower development in anther wall.

Functionally, potential calcium sensor that binds calcium in vitro. The protein is Calcium-binding protein CML38 of Arabidopsis thaliana (Mouse-ear cress).